We begin with the raw amino-acid sequence, 255 residues long: Hydroxyacylglutathione hydrolase (255 aa).

Positions 56, 58, 60, 61, 114, 133, and 171 each coordinate Zn(2+).

Belongs to the metallo-beta-lactamase superfamily. Glyoxalase II family. As to quaternary structure, monomer. Zn(2+) serves as cofactor.

The enzyme catalyses an S-(2-hydroxyacyl)glutathione + H2O = a 2-hydroxy carboxylate + glutathione + H(+). The protein operates within secondary metabolite metabolism; methylglyoxal degradation; (R)-lactate from methylglyoxal: step 2/2. Its function is as follows. Thiolesterase that catalyzes the hydrolysis of S-D-lactoyl-glutathione to form glutathione and D-lactic acid. This is Hydroxyacylglutathione hydrolase from Mesorhizobium japonicum (strain LMG 29417 / CECT 9101 / MAFF 303099) (Mesorhizobium loti (strain MAFF 303099)).